The following is a 252-amino-acid chain: 3-dehydroquinate dehydratase (252 aa).

3-dehydroquinate is bound by residues Ser21, 46 to 48 (EWR), and Arg82. His143 serves as the catalytic Proton donor/acceptor. Residue Lys170 is the Schiff-base intermediate with substrate of the active site. 3-dehydroquinate contacts are provided by Arg213, Ser232, and Gln236.

It belongs to the type-I 3-dehydroquinase family. Homodimer.

The enzyme catalyses 3-dehydroquinate = 3-dehydroshikimate + H2O. It functions in the pathway metabolic intermediate biosynthesis; chorismate biosynthesis; chorismate from D-erythrose 4-phosphate and phosphoenolpyruvate: step 3/7. Functionally, involved in the third step of the chorismate pathway, which leads to the biosynthesis of aromatic amino acids. Catalyzes the cis-dehydration of 3-dehydroquinate (DHQ) and introduces the first double bond of the aromatic ring to yield 3-dehydroshikimate. In Salmonella dublin (strain CT_02021853), this protein is 3-dehydroquinate dehydratase.